Consider the following 964-residue polypeptide: Cycloisomaltooligosaccharide glucanotransferase (964 aa).

The signal sequence occupies residues 1–30; the sequence is MRVKILPLVFMTLLLIVPSQMLLPSGQANA. 2 CBM6 domains span residues 413–538 and 740–863; these read DRYE…LTLG and NMYE…LKLD.

It belongs to the glycosyl hydrolase 66 family.

It catalyses the reaction cyclizes part of a (1-&gt;6)-alpha-D-glucan chain by formation of a (1-&gt;6)-alpha-D-glucosidic bond.. In terms of biological role, produces cycloisomaltooligosaccharide from dextran. The protein is Cycloisomaltooligosaccharide glucanotransferase (cit) of Niallia circulans (Bacillus circulans).